The sequence spans 786 residues: Keratin, type I cytoskeletal 9 (786 aa).

The interval 1-21 is disordered; the sequence is MNCRQFLSSHCSRDSSGGGGG. Residues 1–136 are head; sequence MNCRQFLSSH…SGAGGILGAD (136 aa). Ser52 is modified (phosphoserine). Residues 137–172 are coil 1A; it reads EKTTMQDLNSRLASYLDKVQALEDANKELESKIREW. In terms of domain architecture, IF rod spans 137–449; sequence EKTTMQDLNS…SLLEGGQEDF (313 aa). The tract at residues 173–191 is linker 1; that stretch reads YDKQGSRTFHRDYSPYYDT. Residues 192–283 are coil 1B; it reads IEDLKNQIVN…KNHEDEMSQL (92 aa). The interval 284–306 is linker 12; the sequence is TGQNSGDVNVEMNAAPGRDLTKI. Residues 307–445 form a coil 2 region; sequence LNDMREEYER…KTYRSLLEGG (139 aa). Positions 446–760 are tail; the sequence is QEDFESHESG…GGGSGSKGGS (315 aa). The interval 447 to 786 is disordered; the sequence is EDFESHESGQ…DDTQGYHIQY (340 aa). 2 stretches are compositionally biased toward gly residues: residues 460-657 and 664-761; these read GSGG…GGSG and SSSG…GGSG. Positions 762–773 are enriched in low complexity; sequence RSSQVQSSSSKS.

Belongs to the intermediate filament family. In terms of assembly, heterotetramer of two type I and two type II keratins.

May serve an important special function either in the mature palmar and plantar skin tissue or in the morphogenetic program of the formation of these tissues. Plays a role in keratin filament assembly. The polypeptide is Keratin, type I cytoskeletal 9 (Canis lupus familiaris (Dog)).